Here is a 102-residue protein sequence, read N- to C-terminus: Small ribosomal subunit protein uS10 (102 aa).

It belongs to the universal ribosomal protein uS10 family. In terms of assembly, part of the 30S ribosomal subunit.

In terms of biological role, involved in the binding of tRNA to the ribosomes. The protein is Small ribosomal subunit protein uS10 of Paramagnetospirillum magneticum (strain ATCC 700264 / AMB-1) (Magnetospirillum magneticum).